The following is a 314-amino-acid chain: Methionyl-tRNA formyltransferase (314 aa).

112 to 115 contributes to the (6S)-5,6,7,8-tetrahydrofolate binding site; that stretch reads SLLP.

The protein belongs to the Fmt family.

The catalysed reaction is L-methionyl-tRNA(fMet) + (6R)-10-formyltetrahydrofolate = N-formyl-L-methionyl-tRNA(fMet) + (6S)-5,6,7,8-tetrahydrofolate + H(+). Functionally, attaches a formyl group to the free amino group of methionyl-tRNA(fMet). The formyl group appears to play a dual role in the initiator identity of N-formylmethionyl-tRNA by promoting its recognition by IF2 and preventing the misappropriation of this tRNA by the elongation apparatus. The protein is Methionyl-tRNA formyltransferase of Tolumonas auensis (strain DSM 9187 / NBRC 110442 / TA 4).